Here is a 130-residue protein sequence, read N- to C-terminus: Small ribosomal subunit protein uS8 (130 aa).

The protein belongs to the universal ribosomal protein uS8 family. As to quaternary structure, part of the 30S ribosomal subunit. Contacts proteins S5 and S12.

Its function is as follows. One of the primary rRNA binding proteins, it binds directly to 16S rRNA central domain where it helps coordinate assembly of the platform of the 30S subunit. This is Small ribosomal subunit protein uS8 from Opitutus terrae (strain DSM 11246 / JCM 15787 / PB90-1).